Here is a 330-residue protein sequence, read N- to C-terminus: Tryptophan--tRNA ligase (330 aa).

Residues 10–12 and 18–19 contribute to the ATP site; these read QPS and GN. Positions 11–19 match the 'HIGH' region motif; sequence PSGSVTLGN. Residue D133 coordinates L-tryptophan. ATP is bound by residues 145-147, I184, and 193-197; these read GED and KMSKS. Positions 193 to 197 match the 'KMSKS' region motif; that stretch reads KMSKS.

The protein belongs to the class-I aminoacyl-tRNA synthetase family. Homodimer.

The protein localises to the cytoplasm. The enzyme catalyses tRNA(Trp) + L-tryptophan + ATP = L-tryptophyl-tRNA(Trp) + AMP + diphosphate + H(+). Its function is as follows. Catalyzes the attachment of tryptophan to tRNA(Trp). This is Tryptophan--tRNA ligase from Bacillus subtilis (strain 168).